The following is a 101-amino-acid chain: PAT complex subunit Asterix (101 aa).

Residues 1–26 (MADPRRPARVTRYKPPTTESNPALED) are disordered. The Cytoplasmic segment spans residues 1 to 27 (MADPRRPARVTRYKPPTTESNPALEDP). Residues 28-46 (TPDYMNLLGMVFSMCGLML) traverse the membrane as a helical segment. K47 is a topological domain (lumenal). Residues 48 to 65 (LKWCAWIAVYCSFISFAN) form a helical membrane-spanning segment. At 66–69 (SRSS) the chain is on the cytoplasmic side. The helical transmembrane segment at 70 to 90 (EDTKQMMSSFMLSISAVVMSY) threads the bilayer. Residues 91 to 101 (LQNPQPMSPPW) are Lumenal-facing.

This sequence belongs to the Asterix family. Component of the multi-pass translocon (MPT) complex.

It localises to the endoplasmic reticulum membrane. Its function is as follows. Component of the multi-pass translocon (MPT) complex that mediates insertion of multi-pass membrane proteins into the lipid bilayer of membranes. The MPT complex takes over after the SEC61 complex: following membrane insertion of the first few transmembrane segments of proteins by the SEC61 complex, the MPT complex occludes the lateral gate of the SEC61 complex to promote insertion of subsequent transmembrane regions. In Gallus gallus (Chicken), this protein is PAT complex subunit Asterix (WDR83OS).